Reading from the N-terminus, the 1218-residue chain is NACHT, LRR and PYD domains-containing protein 1a allele 5 (1218 aa).

Residues 1-29 show a composition bias toward polar residues; sequence MGESQSKQESNTRVAQHGSQQDVDPTFQT. 2 disordered regions span residues 1–44 and 71–91; these read MGES…QVEQ and EMDH…DRSE. Over residues 77 to 87 the composition is skewed to basic residues; the sequence is RRHSHQSKKKL. Residues 175–484 form the NACHT domain; sequence QLVIIEGAAG…EFFAAMSYIL (310 aa). 181-188 is a binding site for ATP; it reads GAAGIGKS. LRR repeat units lie at residues 343 to 364, 673 to 693, and 730 to 750; these read KERN…LTLC, NLEE…RSLC, and RLAE…RQLC. The span at 799–815 shows a compositional bias: polar residues; it reads TMPTENTDGEESLTSSK. Residues 799 to 842 form a disordered region; the sequence is TMPTENTDGEESLTSSKQQQQQSGDKHMEPLGTDDDFWGPSGPV. The interval 835 to 968 is ZU5; it reads FWGPSGPVST…HFAVLENPSF (134 aa). One can recognise an FIIND domain in the interval 835–1118; that stretch reads FWGPSGPVST…LRPALPRMAS (284 aa). The tract at residues 969–1118 is UPA; it reads SPMGVLLRMI…LRPALPRMAS (150 aa). The CARD domain maps to 1122-1211; it reads DAPALLHFVD…HLIMDLLEKS (90 aa).

It belongs to the NLRP family. In terms of assembly, interacts (via LRR repeats) with BCL2 and BCL2L1 (via the loop between motifs BH4 and BH3). Interacts with NOD2; this interaction is enhanced in the presence of muramyl dipeptide (MDP) and increases IL1B release. Interacts with EIF2AK2/PKR; this interaction requires EIF2AK2 activity, is accompanied by EIF2AK2 autophosphorylation and promotes inflammasome assembly in response to danger-associated signals. Interacts with MEFV; this interaction targets Nlrp1a to degradation by autophagy, hence preventing excessive IL1B- and IL18-mediated inflammation. Interacts with DPP9; leading to inhibit activation of the inflammasome. DPP9 acts via formation of a ternary complex, composed of a DPP9 homodimer, one full-length NLRP1 protein, and one cleaved C-terminus of Nlrp1a (NACHT, LRR and PYD domains-containing protein 1a, C-terminus). Interacts with DPP8; leading to inhibit activation of the inflammasome, probably via formation of a ternary complex with DPP8. Interacts with the C-terminal part of Nlrp1a (NACHT, LRR and PYD domains-containing protein 1a, C-terminus) in absence of pathogens and other damage-associated signals. As to quaternary structure, interacts with the N-terminal part of Nlrp1a (NACHT, LRR and PYD domains-containing protein 1a, N-terminus) in absence of pathogens and other damage-associated signals. Homomultimer; forms the Nlrp1a inflammasome polymeric complex, a filament composed of homopolymers of this form in response to pathogens and other damage-associated signals. The Nlrp1a inflammasome polymeric complex directly recruits pro-caspase-1 (proCASP1) independently of PYCARD/ASC. Interacts (via CARD domain) with CASP1 (via CARD domain); leading to CASP1 activation. In terms of processing, autocatalytically cleaved. Autocatalytic cleavage in FIIND region occurs constitutively, prior to activation signals, and is required for inflammasome activity (IL1B release), possibly by facilitating CASP1 binding. Both N- and C-terminal parts remain associated non-covalently. Post-translationally, ubiquitinated in response to pathogen-associated signals, leading to its degradation by the proteasome and subsequent release of the cleaved C-terminal part of the protein (NACHT, LRR and PYD domains-containing protein 1a, C-terminus), which polymerizes and forms the Nlrp1a inflammasome.

It is found in the cytoplasm. Its subcellular location is the cytosol. The protein resides in the nucleus. The protein localises to the inflammasome. Its activity is regulated as follows. Activated by pathogens and other damage-associated signals: activation promotes ubiquitination and degradation of the N-terminal part, releasing the cleaved C-terminal part of the protein (NACHT, LRR and PYD domains-containing protein 1a, C-terminus), which polymerizes and forms the Nlrp1a inflammasome. Nlrp1a inflammasome is inhibited by DPP8 and DPP9, which sequester the C-terminal fragment of Nlrp1a (NACHT, LRR and PYD domains-containing protein 1a, C-terminus) in a ternary complex, thereby preventing Nlrp1a oligomerization and activation. Nlrp1a inflammasome is strongly activated by Val-boroPro (Talabostat, PT-100), an inhibitor of dipeptidyl peptidases DPP8 and DPP9. Val-boroPro relieves inhibition of DPP8 and/or DPP9 by promoting disruption of the ternary complex, releasing its C-terminal part from autoinhibition. Not activated by cleavage by B.anthracis lethal toxin (LT) endopeptidase. Highly activated by Toxoplasma gondii. Acts as the sensor component of the Nlrp1a inflammasome, which mediates inflammasome activation in response to various pathogen-associated signals, leading to subsequent pyroptosis. Inflammasomes are supramolecular complexes that assemble in the cytosol in response to pathogens and other damage-associated signals and play critical roles in innate immunity and inflammation. Acts as a recognition receptor (PRR): recognizes specific pathogens and other damage-associated signals, such as Val-boroPro inhibitor, and mediates the formation of the inflammasome polymeric complex. In response to pathogen-associated signals, the N-terminal part of Nlrp1a is degraded by the proteasome, releasing the cleaved C-terminal part of the protein (NACHT, LRR and PYD domains-containing protein 1a, C-terminus), which polymerizes to initiate the formation of the inflammasome complex: the inflammasome directly recruits pro-caspase-1 (proCASP1) independently of PYCARD/ASC and promotes caspase-1 (CASP1) activation, which subsequently cleaves and activates inflammatory cytokines IL1B and IL18 and gasdermin-D (GSDMD), leading to pyroptosis. In the absence of GSDMD expression, the Nlrp1a inflammasome is able to recruit and activate CASP8, leading to activation of gasdermin-E (GSDME). In terms of biological role, constitutes the precursor of the Nlrp1a inflammasome, which mediates autoproteolytic processing within the FIIND domain to generate the N-terminal and C-terminal parts, which are associated non-covalently in absence of pathogens and other damage-associated signals. Functionally, regulatory part that prevents formation of the Nlrp1a inflammasome: in absence of pathogens and other damage-associated signals, interacts with the C-terminal part of Nlrp1a (NACHT, LRR and PYD domains-containing protein 1a, C-terminus), preventing activation of the Nlrp1a inflammasome. In response to pathogen-associated signals, this part is ubiquitinated by the N-end rule pathway and degraded by the proteasome, releasing the cleaved C-terminal part of the protein, which polymerizes and forms the Nlrp1a inflammasome. Its function is as follows. Constitutes the active part of the Nlrp1a inflammasome. In absence of pathogens and other damage-associated signals, interacts with the N-terminal part of Nlrp1a (NACHT, LRR and PYD domains-containing protein 1a, N-terminus), preventing activation of the Nlrp1a inflammasome. In response to pathogen-associated signals, the N-terminal part of Nlrp1a is degraded by the proteasome, releasing this form, which polymerizes to form the Nlrp1a inflammasome complex: the Nlrp1a inflammasome complex then directly recruits pro-caspase-1 (proCASP1) and promotes caspase-1 (CASP1) activation, leading to gasdermin-D (GSDMD) cleavage and subsequent pyroptosis. The chain is NACHT, LRR and PYD domains-containing protein 1a allele 5 from Rattus norvegicus (Rat).